A 256-amino-acid polypeptide reads, in one-letter code: tRNA pseudouridine synthase A (256 aa).

D52 functions as the Nucleophile in the catalytic mechanism. Residue Y110 coordinates substrate.

This sequence belongs to the tRNA pseudouridine synthase TruA family. As to quaternary structure, homodimer.

It carries out the reaction uridine(38/39/40) in tRNA = pseudouridine(38/39/40) in tRNA. Functionally, formation of pseudouridine at positions 38, 39 and 40 in the anticodon stem and loop of transfer RNAs. This chain is tRNA pseudouridine synthase A, found in Stenotrophomonas maltophilia (strain K279a).